The following is a 203-amino-acid chain: Snake venom metalloproteinase adamalysin-2 (203 aa).

Residues 7-203 (RYIELVVVAD…YKPQCILNKP (197 aa)) form the Peptidase M12B domain. Positions 10 and 94 each coordinate Ca(2+). 2 cysteine pairs are disulfide-bonded: Cys-118–Cys-198 and Cys-158–Cys-165. Residue His-143 coordinates Zn(2+). Glu-144 is a catalytic residue. 2 residues coordinate Zn(2+): His-147 and His-153. Ca(2+)-binding residues include Cys-198 and Asn-201.

Belongs to the venom metalloproteinase (M12B) family. P-I subfamily. In terms of assembly, monomer. The cofactor is Zn(2+). In terms of tissue distribution, expressed by the venom gland.

It is found in the secreted. The enzyme catalyses Cleavage of 1-Phe-|-Val-2, 5-His-|-Leu-6, 14-Ala-|-Leu-15, 15-Leu-|-Tyr-16, and 16-Tyr-|-Leu-17 of insulin B chain.. Has no significant hemorrhagic activity, but inactivates serpins by limited proteolysis of their reactive-site loops. This is Snake venom metalloproteinase adamalysin-2 from Crotalus adamanteus (Eastern diamondback rattlesnake).